Consider the following 628-residue polypeptide: 2-oxoacid:ferredoxin oxidoreductase 2, subunit alpha (628 aa).

A YPITP motif motif is present at residues 254–258 (YPITP). Positions 257 and 344 each coordinate substrate.

Heterodimer composed of an alpha and a beta subunit.

It catalyses the reaction a 2-oxocarboxylate + 2 oxidized [2Fe-2S]-[ferredoxin] + CoA = an acyl-CoA + 2 reduced [2Fe-2S]-[ferredoxin] + CO2 + H(+). Its function is as follows. Catalyzes the coenzyme A-dependent oxidative decarboxylation of different 2-oxoacids such as 2-oxoglutarate, pyruvate and 2-oxobutyrate to form their CoA derivatives. This Sulfurisphaera tokodaii (strain DSM 16993 / JCM 10545 / NBRC 100140 / 7) (Sulfolobus tokodaii) protein is 2-oxoacid:ferredoxin oxidoreductase 2, subunit alpha.